A 205-amino-acid chain; its full sequence is Suppressor of IKBKE 1 (205 aa).

Coiled coils occupy residues 4–32 and 154–192; these read TIDK…LIDQ and KAIQ…ESLR.

Belongs to the SIKE family. In terms of assembly, interacts with IKBKE and TBK1 via its coiled coil region. Interaction with TBK1 is disrupted upon viral infection or TLR3 stimulation. Interacts with CDC42BPB. Associates with the STRIPAK core complex composed of PP2A catalytic and scaffolding subunits, the striatins (PP2A regulatory subunits), the striatin-associated proteins MOB4, STRIP1 and STRIP2, PDCD10 and members of the STE20 kinases, such as STK24 and STK26.

Its subcellular location is the cytoplasm. Suppressor of IKK-epsilon. Associates with the striatin-interacting phosphatase and kinase (STRIPAK) core complex, forming the extended (SIKE1:SLMAP)STRIPAK complex. The (SIKE1:SLMAP)STRIPAK complex dephosphorylates STK3 leading to the inhibition of Hippo signaling and the control of cell growth. The polypeptide is Suppressor of IKBKE 1 (sike1) (Xenopus laevis (African clawed frog)).